The chain runs to 239 residues: Phosphoglycolate phosphatase (239 aa).

Asp9 (nucleophile) is an active-site residue. Residues Asp9 and Asp11 each contribute to the Mg(2+) site. Lys157 lines the substrate pocket. The Mg(2+) site is built by Asp180 and Asp184.

Belongs to the archaeal SPP-like hydrolase family. It depends on Mg(2+) as a cofactor.

It catalyses the reaction 2-phosphoglycolate + H2O = glycolate + phosphate. Its function is as follows. Catalyzes the dephosphorylation of 2-phosphoglycolate. This Thermococcus kodakarensis (strain ATCC BAA-918 / JCM 12380 / KOD1) (Pyrococcus kodakaraensis (strain KOD1)) protein is Phosphoglycolate phosphatase.